Here is a 537-residue protein sequence, read N- to C-terminus: Phosphoenolpyruvate carboxykinase (ATP) (537 aa).

Residues Arg61, Tyr195, and Lys201 each coordinate substrate. ATP is bound by residues Lys201, His220, and 236-244 (GLSGTGKTT). Positions 201 and 220 each coordinate Mn(2+). Mn(2+) is bound at residue Asp257. Glu285, Arg323, and Thr448 together coordinate ATP. Arg323 contacts substrate.

This sequence belongs to the phosphoenolpyruvate carboxykinase (ATP) family. It depends on Mn(2+) as a cofactor.

The protein localises to the cytoplasm. It catalyses the reaction oxaloacetate + ATP = phosphoenolpyruvate + ADP + CO2. Its pathway is carbohydrate biosynthesis; gluconeogenesis. Functionally, involved in the gluconeogenesis. Catalyzes the conversion of oxaloacetate (OAA) to phosphoenolpyruvate (PEP) through direct phosphoryl transfer between the nucleoside triphosphate and OAA. This Azorhizobium caulinodans (strain ATCC 43989 / DSM 5975 / JCM 20966 / LMG 6465 / NBRC 14845 / NCIMB 13405 / ORS 571) protein is Phosphoenolpyruvate carboxykinase (ATP).